The sequence spans 404 residues: Peroxisomal biogenesis factor 9 (404 aa).

3 helical membrane-spanning segments follow: residues 73–93 (FLFL…SLVF), 94–114 (LLGV…LLMG), and 149–169 (FGLD…FQVV). Residues 180 to 214 (DGQRSQQSQNSGMNVASSSRGRHQLVPDRPGSQLS) are disordered. Residues 181 to 198 (GQRSQQSQNSGMNVASSS) show a composition bias toward polar residues. Residues 349–369 (FFVGLVSWIVDETAACVVFCL) traverse the membrane as a helical segment.

It is found in the peroxisome membrane. Essential for the import of peroxisomal matrix proteins. The protein is Peroxisomal biogenesis factor 9 (PEX9) of Yarrowia lipolytica (strain CLIB 122 / E 150) (Yeast).